The primary structure comprises 415 residues: Queuine tRNA-ribosyltransferase accessory subunit 2 (415 aa).

The Zn(2+) site is built by C351, C353, C356, and H382.

It belongs to the queuine tRNA-ribosyltransferase family. QTRT2 subfamily. As to quaternary structure, heterodimer of a catalytic subunit qtrt1 and an accessory subunit qtrt2. It depends on Zn(2+) as a cofactor.

Its subcellular location is the cytoplasm. It localises to the mitochondrion outer membrane. Its function is as follows. Non-catalytic subunit of the queuine tRNA-ribosyltransferase (TGT) that catalyzes the base-exchange of a guanine (G) residue with queuine (Q) at position 34 (anticodon wobble position) in tRNAs with GU(N) anticodons (tRNA-Asp, -Asn, -His and -Tyr), resulting in the hypermodified nucleoside queuosine (7-(((4,5-cis-dihydroxy-2-cyclopenten-1-yl)amino)methyl)-7-deazaguanosine). The chain is Queuine tRNA-ribosyltransferase accessory subunit 2 from Xenopus laevis (African clawed frog).